Consider the following 156-residue polypeptide: S-ribosylhomocysteine lyase (156 aa).

Residues H56, H60, and C123 each coordinate Fe cation.

The protein belongs to the LuxS family. In terms of assembly, homodimer. Fe cation serves as cofactor.

The enzyme catalyses S-(5-deoxy-D-ribos-5-yl)-L-homocysteine = (S)-4,5-dihydroxypentane-2,3-dione + L-homocysteine. Functionally, involved in the synthesis of autoinducer 2 (AI-2) which is secreted by bacteria and is used to communicate both the cell density and the metabolic potential of the environment. The regulation of gene expression in response to changes in cell density is called quorum sensing. Catalyzes the transformation of S-ribosylhomocysteine (RHC) to homocysteine (HC) and 4,5-dihydroxy-2,3-pentadione (DPD). This chain is S-ribosylhomocysteine lyase, found in Staphylococcus aureus (strain Mu3 / ATCC 700698).